A 218-amino-acid polypeptide reads, in one-letter code: 3-phospho-D-glycerate guanylyltransferase (218 aa).

This sequence belongs to the CofC family.

It catalyses the reaction (2R)-3-phosphoglycerate + GTP + H(+) = 3-[(R)-glyceryl]-diphospho-5'-guanosine + diphosphate. It participates in cofactor biosynthesis; coenzyme F420 biosynthesis. Guanylyltransferase that catalyzes the activation of (2R)-3-phosphoglycerate (3PG) as 3-[(R)-glyceryl]-diphospho-5'-guanosine, via the condensation of 3PG with GTP. It is involved in the biosynthesis of a derivative of the hydride carrier cofactor coenzyme F420, 3PG-F420. This is 3-phospho-D-glycerate guanylyltransferase from Phenylobacterium zucineum (strain HLK1).